Here is a 210-residue protein sequence, read N- to C-terminus: Cytidylate kinase (210 aa).

9–17 (GPAAAGKGT) is a binding site for ATP.

This sequence belongs to the cytidylate kinase family. Type 1 subfamily.

It localises to the cytoplasm. The catalysed reaction is CMP + ATP = CDP + ADP. It catalyses the reaction dCMP + ATP = dCDP + ADP. This is Cytidylate kinase from Agrobacterium fabrum (strain C58 / ATCC 33970) (Agrobacterium tumefaciens (strain C58)).